A 132-amino-acid chain; its full sequence is Small ribosomal subunit protein uS13 (132 aa).

Over residues 101–125 (RGLPVRGQRTKTNARTRKGPRKTVA) the composition is skewed to basic residues. The tract at residues 101 to 132 (RGLPVRGQRTKTNARTRKGPRKTVANKKIETR) is disordered.

It belongs to the universal ribosomal protein uS13 family. As to quaternary structure, part of the 30S ribosomal subunit. Forms a loose heterodimer with protein S19. Forms two bridges to the 50S subunit in the 70S ribosome.

In terms of biological role, located at the top of the head of the 30S subunit, it contacts several helices of the 16S rRNA. In the 70S ribosome it contacts the 23S rRNA (bridge B1a) and protein L5 of the 50S subunit (bridge B1b), connecting the 2 subunits; these bridges are implicated in subunit movement. Contacts the tRNAs in the A and P-sites. This chain is Small ribosomal subunit protein uS13, found in Ureaplasma urealyticum serovar 10 (strain ATCC 33699 / Western).